Here is a 438-residue protein sequence, read N- to C-terminus: MPNFIDRRLNPKDKSLGNRQRFLKRAREELKRTIKERVKSGKIADVDAEQNVSMPARGVNEPAFQPDSNSGERRHVLPGNREFAAGDRIPKRGGGGGAGNAGAGTGQSEDEFQFVLSREEVLDLFFEDLELPDMVKLNLKESVTFKRRRAGFSASGSPTNINVGRTMRNSYGRRIALRRPSRREIEALADEIARLETEPGGRNKHRQRLEELRQTLDSLERRRRRIPYVDPVDIRFNRFEPQPLPNASAVMFCLMDVSASMGEREKDLAKRFFVLLHLFLKRRYERIDIVFIRHTDEAGEVDENTFFYSKQSGGTVVSTALEEMLRVIRERYPANEWNIYAAQASDGENISGDSERCASLLHDELMGLCQYYAYVEIIDERETEIFGTTDNGTSLWRAYRIVDGEWPNFQMTRIAKPADIYPVFRKLFGKQPEMQLRK.

Residues 55–107 (PARGVNEPAFQPDSNSGERRHVLPGNREFAAGDRIPKRGGGGGAGNAGAGTGQ) form a disordered region. Over residues 92 to 105 (RGGGGGAGNAGAGT) the composition is skewed to gly residues.

It belongs to the UPF0229 family.

This Sinorhizobium medicae (strain WSM419) (Ensifer medicae) protein is UPF0229 protein Smed_1028.